Consider the following 214-residue polypeptide: Adenylate kinase (214 aa).

ATP is bound at residue 10-15; it reads GAGKGT. The tract at residues 30–59 is NMP; that stretch reads STGDMLRAAVKAQTPVGLKAKAVMDRGELV. Residues Thr-31, Arg-36, 57-59, 85-88, and Gln-92 each bind AMP; these read ELV and GYPR. The tract at residues 126–163 is LID; that stretch reads GRFTCAKCGTGYHDRHKQPAREGVCDVCGSTEFKRRPD. Arg-127 is a binding site for ATP. Zn(2+) is bound by residues Cys-130, Cys-133, Cys-150, and Cys-153. Arg-160 and Arg-172 together coordinate AMP. Gly-200 contacts ATP.

It belongs to the adenylate kinase family. As to quaternary structure, monomer.

It is found in the cytoplasm. The enzyme catalyses AMP + ATP = 2 ADP. It functions in the pathway purine metabolism; AMP biosynthesis via salvage pathway; AMP from ADP: step 1/1. Catalyzes the reversible transfer of the terminal phosphate group between ATP and AMP. Plays an important role in cellular energy homeostasis and in adenine nucleotide metabolism. The polypeptide is Adenylate kinase (Erythrobacter litoralis (strain HTCC2594)).